Here is a 61-residue protein sequence, read N- to C-terminus: uncharacterized protein (61 aa).

The next 2 helical transmembrane spans lie at 4–24 and 34–54; these read IIAFIWTFLLSHMACYLVASM and SSVIAVVLYVLIMVLAEIMPM.

It is found in the cell membrane. This is an uncharacterized protein from Bacillus subtilis (strain 168).